A 116-amino-acid polypeptide reads, in one-letter code: Large ribosomal subunit protein uL23 (116 aa).

The protein belongs to the universal ribosomal protein uL23 family. As to quaternary structure, part of the 50S ribosomal subunit. Contacts protein L29, and trigger factor when it is bound to the ribosome.

Functionally, one of the early assembly proteins it binds 23S rRNA. One of the proteins that surrounds the polypeptide exit tunnel on the outside of the ribosome. Forms the main docking site for trigger factor binding to the ribosome. The chain is Large ribosomal subunit protein uL23 from Psychrobacter arcticus (strain DSM 17307 / VKM B-2377 / 273-4).